The chain runs to 807 residues: AP-5 complex subunit zeta-1 (807 aa).

In terms of assembly, probably part of the adaptor protein complex 5 (AP-5) a tetramer composed of AP5B1, AP5M1, AP5S1 and AP5Z1. Interacts with ZFYVE26 and SPG11.

Its subcellular location is the cytoplasm. It is found in the nucleus. As part of AP-5, a probable fifth adaptor protein complex it may be involved in endosomal transport. According to PubMed:20613862 it is a putative helicase required for efficient homologous recombination DNA double-strand break repair. In Homo sapiens (Human), this protein is AP-5 complex subunit zeta-1 (AP5Z1).